The chain runs to 268 residues: Shikimate dehydrogenase (NADP(+)) (268 aa).

Shikimate-binding positions include 13–15 and T60; that span reads SLS. Catalysis depends on K64, which acts as the Proton acceptor. E76 lines the NADP(+) pocket. N85 and D100 together coordinate shikimate. Residues 124–128, 148–153, and I209 contribute to the NADP(+) site; these read GAGGA and NRTMAR. A shikimate-binding site is contributed by Y211. Residue G232 coordinates NADP(+).

This sequence belongs to the shikimate dehydrogenase family. As to quaternary structure, homodimer.

The catalysed reaction is shikimate + NADP(+) = 3-dehydroshikimate + NADPH + H(+). Its pathway is metabolic intermediate biosynthesis; chorismate biosynthesis; chorismate from D-erythrose 4-phosphate and phosphoenolpyruvate: step 4/7. Involved in the biosynthesis of the chorismate, which leads to the biosynthesis of aromatic amino acids. Catalyzes the reversible NADPH linked reduction of 3-dehydroshikimate (DHSA) to yield shikimate (SA). The protein is Shikimate dehydrogenase (NADP(+)) of Staphylococcus aureus (strain bovine RF122 / ET3-1).